The chain runs to 211 residues: Pyridoxine/pyridoxamine 5'-phosphate oxidase (211 aa).

Substrate contacts are provided by residues 7 to 10 (RREY) and Lys65. FMN contacts are provided by residues 60–65 (RIVLLK), 75–76 (YT), Arg81, Lys82, and Gln104. Substrate-binding residues include Tyr122, Arg126, and Ser130. FMN-binding positions include 139–140 (QS) and Trp184. 190–192 (RLH) contacts substrate. Residue Arg194 coordinates FMN.

It belongs to the pyridoxamine 5'-phosphate oxidase family. As to quaternary structure, homodimer. FMN serves as cofactor.

The catalysed reaction is pyridoxamine 5'-phosphate + O2 + H2O = pyridoxal 5'-phosphate + H2O2 + NH4(+). The enzyme catalyses pyridoxine 5'-phosphate + O2 = pyridoxal 5'-phosphate + H2O2. Its pathway is cofactor metabolism; pyridoxal 5'-phosphate salvage; pyridoxal 5'-phosphate from pyridoxamine 5'-phosphate: step 1/1. The protein operates within cofactor metabolism; pyridoxal 5'-phosphate salvage; pyridoxal 5'-phosphate from pyridoxine 5'-phosphate: step 1/1. Functionally, catalyzes the oxidation of either pyridoxine 5'-phosphate (PNP) or pyridoxamine 5'-phosphate (PMP) into pyridoxal 5'-phosphate (PLP). This is Pyridoxine/pyridoxamine 5'-phosphate oxidase from Vibrio campbellii (strain ATCC BAA-1116).